A 1872-amino-acid polypeptide reads, in one-letter code: MFSRRSHGDVKKSTQKVLDPKKDVLTRLKHLRALLDNVDASDLKQFFETNYSQIYFIFYENFITLENSLKLKGNNKSQREELDSILFLFEKILQFLPERIFFRWHYQSIGSTLKKLLHTGNSIKIRCEGIRLFLLWLQALQTNCAEEQVLIFACLVPGFPAVLSSRGPCTLETLINPSPSVVDAKIYPEEITPLLPAVSGEKIAEDQTCFFLQILLKYMVIQAASLEWKNKENQDTGFKFLFTLFRKYYLPHLFPSFTKLTNIYKPVLEIPHLRPKPLYVTVTRDNETIYSTKIPYMAARVVFIKWIVTFFLEKKYLTATQNTKNGVDVLPKIIQTVGGGAIQEKVPELDGAGATEQDKSHSNSSTLSDRRLSNSSLCSIEEEHRTVYEMVQRILLSTRGYVNFVNEVFRQAFLLPSCEISITRKVVQVYRKWILQNKPVFMEEPDKKDVAEEDADKLGLSETDSKEVSSESSGHKRSSSWGRTYSFTSAMSRGCVTEEDNTNVKAGAQAMLQVFLTNAANVFLLEPCVEVPMLLREQVDACKAVLIIFRRMIMELTMNQKTWEQMLQILLRITEAVMQKPKDKLVQDSFARSLAGLLFRTLIVAWIRANLCVYISRELWDDFLRVLSSLTEWEELITEWSNIMDSLTAVLARTVYGVEMTNLPLDKLSEQKEKKQRGKGCVLEPQKGTAVGRSFSLSWRSHPDVTEPMRFRSATTSGAPGVEKARNTVRQKATEVEEFQQAESTAAADCDYLVVGQQPVPRSSSTSDITERLYSDSSQGQKVENSQNLSSSEPKSVQESKGHVTHEHEGVTILVRRSSSPAELDLKEESQQTHGRCRERQKSESTGSDMAVGYSNEAELPVSPWQTCEEDPELSTPTDAVADSDARHWLQLSPTDASNLTESRECLADDCSIIAGGNLTGWHPDSAAVLWRRVLGILGDVNNIQSPKIHAKVFSYLYELWYKLAKIRDNLAISLDNQSSPSPPLLIPPLRMFASWLFKATTLPNEYKEGKLQAYKLICAMMTRRQDVLPNSDFLVHFYLVMHLGLTSEDQDVLNTIIKNCSPRFFSLGLPGFSMLVGDFITAAARVLSTDMLAAPRSEALTLLGSLVCFPNTYQEIPLLQSVPEVSDVVTGAEDVKHYLINILLKNATEEPNECARCIAICSLGVWICEELAQCASHPQVKDAINVIGVTLKFPNKIVAQVACDVLQLLVSYWEKLQMFETALPRKMAEILVATIAFLLPSAEYSSVETDKKFIVSLLLCLLDWCMALPVSALLHPVSTAVIEELHPSRAPLLDYIYRVLHCCVCGSSTYTQQSHYTLTLADLSSTDYDPFLPLANVRNSEPVQYHSSADLGNLLTVEEEKKRRSVELIPLTARMVMAHLVNHLGHYPLSGGPAVLHSLVSENHDNAHVEGTELSSEVFRSPNLQLFVFNDSTLISYLQTPAEGPAGGTSGGSLSDVRVIVRDISGKYSWDGKVLYGPLEGRLAPSGRNPSFQISGWHHHTCGPQSNLFHGEEGDDVLDKLLENIGHTSPECLLPSQLNLNEPSPTPSAMNCDQEKEIIEVILRQSTQEDEYVQRCHSNSAVKVTSQGQPSPVEPRGPFYFCRLLLDDLGMNSWDRRKNFHLLKKNSKLLRELKNLDSRQCRETHKIAVFYIAEGQEDKCSILANERGSQAYEDFVAGLGWEVDLSTHCGFMGGLQRNGSTGQTAPYYATSTVEVIFHVSTRMPSDSDDSLTKKLRHLGNDEVHIVWSEHSRDYRRGIIPTAFGDVSIIIYPMKNHMFFITITKKPEVPFFGPLFDGAIVSGKLLPSLICATCINASRAVKCLIPLYQSFYEERALYLEAIIQNHREVMTFEDFAAQVFSPSPSYSLSGTD.

Residues S373, S376, and S379 each carry the phosphoserine modification. Residues 446–469 (DKKDVAEEDADKLGLSETDSKEVS) are compositionally biased toward basic and acidic residues. The disordered stretch occupies residues 446-481 (DKKDVAEEDADKLGLSETDSKEVSSESSGHKRSSSW). Residues S486 and S696 each carry the phosphoserine modification. 2 disordered regions span residues 711–730 (FRSA…NTVR) and 758–849 (QPVP…TGSD). Position 715 is a phosphothreonine; by PKB (T715). A compositionally biased stretch (polar residues) spans 775-795 (SDSSQGQKVENSQNLSSSEPK). The span at 796 to 810 (SVQESKGHVTHEHEG) shows a compositional bias: basic and acidic residues. Phosphoserine is present on residues S819 and S820. The span at 824–843 (LDLKEESQQTHGRCRERQKS) shows a compositional bias: basic and acidic residues. The residue at position 1592 (S1592) is a Phosphoserine. One can recognise a Rap-GAP domain in the interval 1634–1842 (LKNLDSRQCR…EERALYLEAI (209 aa)).

As to quaternary structure, component of the heterodimeric RalGAP2 complex with RALGAPB. Heterodimerization is required for activity. As to expression, highly expressed in lung, liver, testis and thymus with lower levels in brain and heart (at protein level).

Its subcellular location is the cytoplasm. In terms of biological role, catalytic subunit of the heterodimeric RalGAP2 complex which acts as a GTPase activator for the Ras-like small GTPases RALA and RALB. This chain is Ral GTPase-activating protein subunit alpha-2, found in Rattus norvegicus (Rat).